Consider the following 137-residue polypeptide: Large ribosomal subunit protein uL16 (137 aa).

Positions 1 to 17 (MLQPKRTKFRKQQKGRN) are enriched in basic residues. The interval 1–24 (MLQPKRTKFRKQQKGRNRGLAQSG) is disordered.

The protein belongs to the universal ribosomal protein uL16 family. As to quaternary structure, part of the 50S ribosomal subunit.

Functionally, binds 23S rRNA and is also seen to make contacts with the A and possibly P site tRNAs. This chain is Large ribosomal subunit protein uL16, found in Dichelobacter nodosus (strain VCS1703A).